A 441-amino-acid polypeptide reads, in one-letter code: Ribosomal protein uS12 methylthiotransferase RimO (441 aa).

Positions 7–117 (ASIAMISLGC…VVLEVHRAAP (111 aa)) constitute an MTTase N-terminal domain. 6 residues coordinate [4Fe-4S] cluster: cysteine 16, cysteine 52, cysteine 81, cysteine 150, cysteine 154, and cysteine 157. A Radical SAM core domain is found at 136-373 (LTPRHYAYLK…MAHQQAISAA (238 aa)). Residues 376–441 (QTRVGREIDV…DEYDLHGDAV (66 aa)) form the TRAM domain.

This sequence belongs to the methylthiotransferase family. RimO subfamily. [4Fe-4S] cluster is required as a cofactor.

It is found in the cytoplasm. It carries out the reaction L-aspartate(89)-[ribosomal protein uS12]-hydrogen + (sulfur carrier)-SH + AH2 + 2 S-adenosyl-L-methionine = 3-methylsulfanyl-L-aspartate(89)-[ribosomal protein uS12]-hydrogen + (sulfur carrier)-H + 5'-deoxyadenosine + L-methionine + A + S-adenosyl-L-homocysteine + 2 H(+). Functionally, catalyzes the methylthiolation of an aspartic acid residue of ribosomal protein uS12. This chain is Ribosomal protein uS12 methylthiotransferase RimO, found in Bordetella petrii (strain ATCC BAA-461 / DSM 12804 / CCUG 43448).